We begin with the raw amino-acid sequence, 1204 residues long: MGDAKEAGAEGPPAGAAAREGLSLLSQAESEESSAQGSALFLGGNEVKSRAVVKYSSAPPRTAFARLEEKTDLKLPPANWLRESAKLGPAGTTILGNSKKSKPFSSFGMAYDFIDSVGNDVDVVSDSENIKKLLKIPYSKSHVSMAVHRIGRTLLLDELDIQELFMRSSQTGDWTWLKEFYQRLIDQKWQRKKKSKEHWYQKAILSKFLYYSINGDGAAQPVSSTTEQQESSSSDQTNDSEGASWPAPFEMPSSVSEDPSASSQGLKNDFVRNILWTFEDIHMLVGSNMPIFGGGRYPAVSLRLRDNNKPINVLTGIDYWLDNLICNVPELVMCFHVNGIVQKYEMIKTEEIPNLENSNFSTKVIKDIAQNILSFLKSNCTKEGHTYWLFKASGSDIVKLYDLTTLCEETEDKYQNPFTMPVAILLYKVACNMMMKKNQNKKHYGTIRTLLLNCLKLLDKSRHPQIIASANYMLSELFQLDEPKKEENSESPLNENSDESYSEEEEEMPDSDENGSYSTSSDPSDDSNAVAIIKSVGELSVPEKYKSIHQIRPSCAFPVCHDTEERCRLVLSYVLEGLKSVDSSIKKESDLPAADPSTPIPLKYEDESSRGGPEGLEKQMALFLDKMGSLQKGNYSSQSGMIPGSWQHKMKLQLILKSSKAYYVLSDAAMSLQKYGRALRYIKLALQSHDTYCCLCTNMLSEVLLFLSQYLTLCGDIQLMLAQNANNRAAHLEEFHYRTKEDQEILHSLHRESSCQGFAWATDLSTDLESQLSVSCKCYEATNEILQFSDLKSQNPEHYVQVLKRMGNIRNEIGVFYMNQAAALQSERVVSKSVSAAEQQLWKKSFSCFEKGIHNFESIEDATNAALLLCNTGRLMRICAQAHCGAGDEFKREFSPEEGLYYNKAIDYYLKALRSLGTRDIHPAVWDSVNWELSTTYFTMATLQQDYAPLSRKAQEQIEKEVSEAMMKSLKYCDVDSVSARQPLCQYRAATIHHRLASMYHSCLRNQLGDEHLRKQHRVLADLHYSKAAKLFQLLKDAPCELLRVQLERVAFAEFQMTSQNSNVGKLKTLSGALNIMVRTEHAFQLIQKELIEELGQPKSGDAAVAADASPSLNREEVMKLLSIFESRLSFLLLQSIKLLSSTKKKTSNNIEDDAVLKTNKHIYSQLLRATANKTATLLERINVIIHLLGQLAAGSAASSNAVQ.

4 disordered regions span residues 1–30 (MGDA…QAES), 220–264 (QPVS…ASSQ), 483–527 (PKKE…SDDS), and 586–613 (KKES…RGGP). 3 stretches are compositionally biased toward low complexity: residues 9 to 30 (AEGP…QAES), 223 to 241 (SSTT…NDSE), and 253 to 263 (SSVSEDPSASS). Acidic residues predominate over residues 496–513 (NSDESYSEEEEEMPDSDE). TPR repeat units follow at residues 693 to 726 (CCLC…QNAN) and 920 to 953 (DIHP…LSRK).

The protein localises to the nucleus. In terms of biological role, transcription factor involved in erythroid differentiation. Involved in transcriptional activation of the globin gene. The sequence is that of Erythroid differentiation-related factor 1 (EDRF1) from Pongo abelii (Sumatran orangutan).